The chain runs to 139 residues: Large ribosomal subunit protein uL16 (139 aa).

Residues 1–19 (MLIPRKVKHRKQHHPKRSG) are compositionally biased toward basic residues. The disordered stretch occupies residues 1–22 (MLIPRKVKHRKQHHPKRSGVAK).

Belongs to the universal ribosomal protein uL16 family. In terms of assembly, part of the 50S ribosomal subunit.

Binds 23S rRNA and is also seen to make contacts with the A and possibly P site tRNAs. This is Large ribosomal subunit protein uL16 from Acidothermus cellulolyticus (strain ATCC 43068 / DSM 8971 / 11B).